The chain runs to 554 residues: Bifunctional epoxide hydrolase 2 (554 aa).

A phosphatase region spans residues 1 to 224; it reads MALRVAAFDL…KVTGTQFPEA (224 aa). Residues Asp9 and Asp11 each contribute to the Mg(2+) site. At Lys55 the chain carries N6-succinyllysine. Residue 123–124 participates in phosphate binding; that stretch reads TN. Residue Lys176 is modified to N6-acetyllysine; alternate. Position 176 is an N6-succinyllysine; alternate (Lys176). Residue Asp185 coordinates Mg(2+). N6-acetyllysine is present on residues Lys191 and Lys215. Residues 233–554 form an epoxide hydrolase region; that stretch reads NDVSHGYVTV…IQNPSVTSKI (322 aa). Residues 257-530 enclose the AB hydrolase-1 domain; it reads PAICLCHGFP…CGHWTQIEKP (274 aa). Residue Asp333 is the Nucleophile of the active site. Position 368 is a phosphoserine (Ser368). Tyr381 contributes to the substrate binding site. Lys420 and Lys454 each carry N6-succinyllysine. The active-site Proton donor is the Tyr465. Lys504 is modified (N6-succinyllysine). Cys521 carries the S-(15-deoxy-Delta12,14-prostaglandin J2-9-yl)cysteine lipid modification. His523 serves as the catalytic Proton acceptor. The Microbody targeting signal signature appears at 552–554; that stretch reads SKI. Position 553 is an N6-succinyllysine (Lys553).

It belongs to the AB hydrolase superfamily. Epoxide hydrolase family. In terms of assembly, homodimer. Mg(2+) is required as a cofactor. In terms of processing, the covalent modification of cysteine by 15-deoxy-Delta12,14-prostaglandin-J2 is autocatalytic and reversible. It may occur as an alternative to other cysteine modifications, such as S-nitrosylation and S-palmitoylation.

It is found in the cytoplasm. It localises to the peroxisome. It carries out the reaction an epoxide + H2O = an ethanediol. The enzyme catalyses (9S,10S)-10-hydroxy-9-(phosphooxy)octadecanoate + H2O = (9S,10S)-9,10-dihydroxyoctadecanoate + phosphate. The catalysed reaction is 8-hydroxy-(11S,12S)-epoxy-(5Z,9E,14Z)-eicosatrienoate + H2O = (8,11R,12S)-trihydroxy-(5Z,9E,14Z)-eicosatrienoate. It catalyses the reaction 10-hydroxy-(11S,12S)-epoxy- (5Z,8Z,14Z)-eicosatrienoate + H2O = (10,11S,12R)-trihydroxy-(5Z,8Z,14Z)-eicosatrienoate. It carries out the reaction 12-phosphooxy-(9Z)-octadecenoate + H2O = 12-hydroxy-(9Z)-octadecenoate + phosphate. The enzyme catalyses 12-phosphooxy-(9E)-octadecenoate + H2O = 12-hydroxy-(9E)-octadecenoate + phosphate. The catalysed reaction is 12-(phosphooxy)octadecanoate + H2O = 12-hydroxyoctadecanoate + phosphate. It catalyses the reaction 8,9-epoxy-(5Z,11Z,14Z)-eicosatrienoate + H2O = 8,9-dihydroxy-(5Z,11Z,14Z)-eicosatrienoate. It carries out the reaction 11,12-epoxy-(5Z,8Z,14Z)-eicosatrienoate + H2O = 11,12-dihydroxy-(5Z,8Z,14Z)-eicosatrienoate. The enzyme catalyses 14,15-epoxy-(5Z,8Z,11Z)-eicosatrienoate + H2O = 14,15-dihydroxy-(5Z,8Z,11Z)-eicosatrienoate. The catalysed reaction is 9,10-epoxy-(12Z)-octadecenoate + H2O = 9,10-dihydroxy-(12Z)-octadecenoate. It catalyses the reaction 1-tetradecanoyl-sn-glycerol 3-phosphate + H2O = 1-tetradecanoyl-sn-glycerol + phosphate. It carries out the reaction 1-octadecanoyl-sn-glycero-3-phosphate + H2O = 1-octadecanoyl-sn-glycerol + phosphate. The enzyme catalyses 1-(5Z,8Z,11Z,14Z-eicosatetraenoyl)-sn-glycero-3-phosphate + H2O = 1-(5Z,8Z,11Z,14Z-eicosatetraenoyl)-sn-glycerol + phosphate. The catalysed reaction is 1-hexadecanoyl-sn-glycero-3-phosphate + H2O = 1-hexadecanoyl-sn-glycerol + phosphate. It catalyses the reaction 1-(9Z-octadecenoyl)-sn-glycero-3-phosphate + H2O = 1-(9Z-octadecenoyl)-sn-glycerol + phosphate. It carries out the reaction (8S,9R)-epoxy-(5Z,11Z,14Z)-eicosatrienoate + H2O = (8S,9S)-dihydroxy-(5Z,11Z,14Z)-eicosatrienoate. The enzyme catalyses (11S,12R)-epoxy-(5Z,8Z,14Z)-eicosatrienoate + H2O = (11R,12R)-dihydroxy-(5Z,8Z,14Z)-eicosatrienoate. The catalysed reaction is (11S,12R)-epoxy-(5Z,8Z,14Z)-eicosatrienoate + H2O = (11S,12S)-dihydroxy-(5Z,8Z,14Z)-eicosatrienoate. It catalyses the reaction (14S,15R)-epoxy-(5Z,8Z,11Z)-eicosatrienoate + H2O = (14R,15R)-dihydroxy-(5Z,8Z,11Z)-eicosatrienoate. It carries out the reaction (14S,15R)-epoxy-(5Z,8Z,11Z)-eicosatrienoate + H2O = (14S,15S)-dihydroxy-(5Z,8Z,11Z)-eicosatrienoate. The enzyme catalyses (11R,12S)-epoxy-(5Z,8Z,14Z)-eicosatrienoate + H2O = (11S,12S)-dihydroxy-(5Z,8Z,14Z)-eicosatrienoate. The catalysed reaction is (11R,12S)-epoxy-(5Z,8Z,14Z)-eicosatrienoate + H2O = (11R,12R)-dihydroxy-(5Z,8Z,14Z)-eicosatrienoate. It catalyses the reaction (8S,9R)-epoxy-(5Z,11Z,14Z)-eicosatrienoate + H2O = (8R,9R)-dihydroxy-(5Z,11Z,14Z)-eicosatrienoate. It carries out the reaction (14R,15S)-epoxy-(5Z,8Z,11Z)-eicosatrienoate + H2O = (14R,15R)-dihydroxy-(5Z,8Z,11Z)-eicosatrienoate. Its activity is regulated as follows. Inhibited by 1-(1-acetylpiperidin-4-yl)-3-(4-(trifl uoromethoxy)phenyl)urea (TPAU), 1-cyclohexyl-3-dodecylurea (CDU), 12-(3-adamantan-1-yl-ureido)-dodecanoic acid (AUDA), 1-((3S, 5S, 7S)-adamantan-1-yl)-3-(5-(2-(2-ethoxyethoxy) ethoxy)pentyl)urea (AEPU), N-adamantyl-N[']-cyclohexyl urea (ACU), 4-(((1S, 4S)-4-(3-((3S, 5S, 7S)-adamantan-1-yl) ureido)cyclohexyl)oxy)benzoic acid (c-AUCB), 4-(((1R, 4R)-4-(3-((3S, 5S, 7S)-adamantan-1-yl)ureido)cyclohexyl)oxy)benzoic acid (t-AUCB), 4-(((1R, 4R)-4-(3-(4(trifluoromethoxy)phenyl)ureido)cyclohexyl)oxy)benzoic acid (t-TAUCB) and to a lesser extent by 8-(3-((3S, 5S, 7S)-adamantan-1-yl)ureido) octanoic acid (AUOA). Phosphatase activity is inhibited by dodecyl-phosphate, phospholipids such as phospho-lysophosphatidic acids and fatty acids such as palmitic acid and lauric acid. Bifunctional enzyme. The C-terminal domain has epoxide hydrolase activity and acts on epoxides (alkene oxides, oxiranes) and arene oxides. Plays a role in xenobiotic metabolism by degrading potentially toxic epoxides. Also determines steady-state levels of physiological mediators. The N-terminal domain has lipid phosphatase activity, with the highest activity towards threo-9,10-phosphonooxy-hydroxy-octadecanoic acid, followed by erythro-9,10-phosphonooxy-hydroxy-octadecanoic acid, 12-phosphonooxy-octadec-9Z-enoic acid and 12-phosphonooxy-octadec-9E-enoic acid. Functionally, bifunctional enzyme. The C-terminal domain has epoxide hydrolase activity and acts on epoxides (alkene oxides, oxiranes) and arene oxides. Plays a role in xenobiotic metabolism by degrading potentially toxic epoxides. Also determines steady-state levels of physiological mediators. In terms of biological role, bifunctional enzyme. The N-terminal domain has lipid phosphatase activity, with the highest activity towards threo-9,10-phosphonooxy-hydroxy-octadecanoic acid, followed by erythro-9,10-phosphonooxy-hydroxy-octadecanoic acid, 12-phosphonooxy-octadec-9Z-enoic acid and 12-phosphonooxy-octadec-9E-enoic acid. Has phosphatase activity toward lyso-glycerophospholipids with also some lower activity toward lysolipids of sphingolipid and isoprenoid phosphates. This Rattus norvegicus (Rat) protein is Bifunctional epoxide hydrolase 2.